The primary structure comprises 198 residues: Small ribosomal subunit protein uS5 (198 aa).

The 64-residue stretch at 46–109 folds into the S5 DRBM domain; that stretch reads LEDDVLEISM…NNAKLNIFKV (64 aa).

The protein belongs to the universal ribosomal protein uS5 family. As to quaternary structure, part of the 30S ribosomal subunit. Contacts protein S4.

Functionally, with S4 and S12 plays an important role in translational accuracy. This is Small ribosomal subunit protein uS5 from Archaeoglobus fulgidus (strain ATCC 49558 / DSM 4304 / JCM 9628 / NBRC 100126 / VC-16).